The following is a 902-amino-acid chain: Tiger protein B1 (902 aa).

Residues 1-24 (MKVIYIYLLLLLVCKFLFVKSSCS) form the signal peptide. Topologically, residues 25-803 (LKVGKIECTK…IIYSENKSTG (779 aa)) are extracellular. N-linked (GlcNAc...) asparagine glycosylation is found at N43, N144, N184, N223, N272, N279, N288, N358, N389, N398, N437, N559, N628, N644, N706, N753, N764, N771, and N799. The 75-residue stretch at 249 to 323 (MEGVLNDNGG…ITIDGEYKSN (75 aa)) folds into the IPT/TIG 1 domain. 2 IPT/TIG domains span residues 603–680 (PIIE…ISSS) and 704–788 (ITNT…IFQF). Residues 804–824 (FPNEMYLGFVVFVIFIALISF) form a helical membrane-spanning segment. Over 825 to 902 (AAKNQIEKYF…IRRCFKEHTD (78 aa)) the chain is Cytoplasmic.

Its subcellular location is the cell membrane. Its function is as follows. tgrB1 and tgrC1 are involved in kin discrimination. They play an essential role in aggregation and subsequent development. This chain is Tiger protein B1 (tgrB1), found in Dictyostelium discoideum (Social amoeba).